The chain runs to 533 residues: Tyrosinase (533 aa).

Positions 1 to 18 are cleaved as a signal peptide; the sequence is MFLAVLYCLLWSFQISDG. The Lumenal, melanosome portion of the chain corresponds to 19–476; sequence HFPRACASSK…YLEQASRIWP (458 aa). Residues Asn-86, Asn-111, and Asn-161 are each glycosylated (N-linked (GlcNAc...) asparagine). Cu cation contacts are provided by His-180, His-202, and His-211. N-linked (GlcNAc...) asparagine glycosylation is found at Asn-230 and Asn-337. Cu cation is bound by residues His-363 and His-367. An N-linked (GlcNAc...) asparagine glycan is attached at Asn-371. His-390 contacts Cu cation. The chain crosses the membrane as a helical span at residues 477 to 497; that stretch reads WLLGAALVGAVIAAALSGLSS. At 498–533 the chain is on the cytoplasmic side; the sequence is RLCLQKKKKKKQPQEERQPLLMDKDDYHSLLYQSHL.

Belongs to the tyrosinase family. As to quaternary structure, forms an OPN3-dependent complex with DCT in response to blue light in melanocytes. It depends on Cu(2+) as a cofactor. In terms of processing, glycosylated. Expressed in the skin.

The protein resides in the melanosome membrane. The protein localises to the melanosome. It carries out the reaction 2 L-dopa + O2 = 2 L-dopaquinone + 2 H2O. The catalysed reaction is L-tyrosine + O2 = L-dopaquinone + H2O. It catalyses the reaction 2 5,6-dihydroxyindole-2-carboxylate + O2 = 2 indole-5,6-quinone-2-carboxylate + 2 H2O. Its function is as follows. This is a copper-containing oxidase that functions in the formation of pigments such as melanins and other polyphenolic compounds. Catalyzes the initial and rate limiting step in the cascade of reactions leading to melanin production from tyrosine. In addition to hydroxylating tyrosine to DOPA (3,4-dihydroxyphenylalanine), also catalyzes the oxidation of DOPA to DOPA-quinone, and possibly the oxidation of DHI (5,6-dihydroxyindole) to indole-5,6 quinone. The sequence is that of Tyrosinase (Tyr) from Mus musculus (Mouse).